A 265-amino-acid chain; its full sequence is Ribosomal RNA small subunit methyltransferase A (265 aa).

S-adenosyl-L-methionine-binding residues include His17, Leu19, Gly44, Glu65, Asp90, and Asn112.

Belongs to the class I-like SAM-binding methyltransferase superfamily. rRNA adenine N(6)-methyltransferase family. RsmA subfamily.

It is found in the cytoplasm. It catalyses the reaction adenosine(1518)/adenosine(1519) in 16S rRNA + 4 S-adenosyl-L-methionine = N(6)-dimethyladenosine(1518)/N(6)-dimethyladenosine(1519) in 16S rRNA + 4 S-adenosyl-L-homocysteine + 4 H(+). Functionally, specifically dimethylates two adjacent adenosines (A1518 and A1519) in the loop of a conserved hairpin near the 3'-end of 16S rRNA in the 30S particle. May play a critical role in biogenesis of 30S subunits. The sequence is that of Ribosomal RNA small subunit methyltransferase A from Xylella fastidiosa (strain Temecula1 / ATCC 700964).